The sequence spans 231 residues: Insertion sequence IS1162 putative ATP-binding protein (231 aa).

107-114 is an ATP binding site; it reads GPTGVGKT.

This sequence belongs to the IS21/IS1162 putative ATP-binding protein family.

In Pseudomonas fluorescens, this protein is Insertion sequence IS1162 putative ATP-binding protein.